Consider the following 266-residue polypeptide: uncharacterized protein (266 aa).

The helical transmembrane segment at 13 to 33 (IIGLMLIIFAGILFYAYILQH) threads the bilayer.

This sequence belongs to the LicD transferase family.

The protein resides in the membrane. This is an uncharacterized protein from Rickettsia prowazekii (strain Madrid E).